Here is a 454-residue protein sequence, read N- to C-terminus: tRNA modification GTPase MnmE (454 aa).

(6S)-5-formyl-5,6,7,8-tetrahydrofolate contacts are provided by R23, E80, and K120. Residues 216 to 377 (GMKVVIAGRP…LRNNLKQSMG (162 aa)) form the TrmE-type G domain. N226 contacts K(+). Residues 226–231 (NAGKSS), 245–251 (TDIAGTT), 270–273 (DTAG), 335–338 (NKAD), and 358–360 (SAR) each bind GTP. Residue S230 coordinates Mg(2+). K(+) contacts are provided by T245, I247, and T250. T251 is a Mg(2+) binding site. Residue K454 participates in (6S)-5-formyl-5,6,7,8-tetrahydrofolate binding.

Belongs to the TRAFAC class TrmE-Era-EngA-EngB-Septin-like GTPase superfamily. TrmE GTPase family. As to quaternary structure, homodimer. Heterotetramer of two MnmE and two MnmG subunits. K(+) is required as a cofactor.

The protein resides in the cytoplasm. Exhibits a very high intrinsic GTPase hydrolysis rate. Involved in the addition of a carboxymethylaminomethyl (cmnm) group at the wobble position (U34) of certain tRNAs, forming tRNA-cmnm(5)s(2)U34. The chain is tRNA modification GTPase MnmE from Salmonella paratyphi A (strain AKU_12601).